Reading from the N-terminus, the 363-residue chain is Melanoma-associated antigen B16 (363 aa).

Positions 33–124 (EPCSSPHLMA…PDQSDSTDLP (92 aa)) are disordered. Residues 82–97 (ASTSSDLQHPYDSSSE) show a composition bias toward low complexity. Residues 128–327 (VDGKVDFLVN…TVFLSQYEEA (200 aa)) enclose the MAGE domain. Residues 342 to 363 (HADSSSTSGESSSDTSSNFSQV) are disordered.

This chain is Melanoma-associated antigen B16 (Mageb16), found in Mus musculus (Mouse).